Reading from the N-terminus, the 561-residue chain is Eukaryotic translation initiation factor 3 subunit D-1 (561 aa).

The tract at residues 98–164 is disordered; it reads VQKPPHQRGR…RGPPPKMRES (67 aa). A compositionally biased stretch (basic residues) spans 100–121; sequence KPPHQRGRFRNMRNSRSGRGRN. At Thr128 the chain carries Phosphothreonine. Positions 289-303 are RNA gate; it reads EFDLLTVNETSVEPP.

This sequence belongs to the eIF-3 subunit D family. Component of the eukaryotic translation initiation factor 3 (eIF-3) complex. The eIF-3 complex interacts with pix.

The protein localises to the cytoplasm. Its function is as follows. mRNA cap-binding component of the eukaryotic translation initiation factor 3 (eIF-3) complex, which is involved in protein synthesis of a specialized repertoire of mRNAs and, together with other initiation factors, stimulates binding of mRNA and methionyl-tRNAi to the 40S ribosome. The eIF-3 complex specifically targets and initiates translation of a subset of mRNAs involved in cell proliferation. In the eIF-3 complex, eif3d specifically recognizes and binds the 7-methylguanosine cap of a subset of mRNAs. The chain is Eukaryotic translation initiation factor 3 subunit D-1 from Drosophila ananassae (Fruit fly).